The chain runs to 335 residues: DNA-directed RNA polymerase subunit alpha (335 aa).

The tract at residues 1-231 is alpha N-terminal domain (alpha-NTD); that stretch reads MVREKVTVST…DLFIPFLHME (231 aa). An alpha C-terminal domain (alpha-CTD) region spans residues 262-335; that stretch reads KKKLSLESIF…FALDLPKNLN (74 aa).

This sequence belongs to the RNA polymerase alpha chain family. As to quaternary structure, in plastids the minimal PEP RNA polymerase catalytic core is composed of four subunits: alpha, beta, beta', and beta''. When a (nuclear-encoded) sigma factor is associated with the core the holoenzyme is formed, which can initiate transcription.

The protein localises to the plastid. The enzyme catalyses RNA(n) + a ribonucleoside 5'-triphosphate = RNA(n+1) + diphosphate. Its function is as follows. DNA-dependent RNA polymerase catalyzes the transcription of DNA into RNA using the four ribonucleoside triphosphates as substrates. This Cuscuta reflexa (Southern Asian dodder) protein is DNA-directed RNA polymerase subunit alpha.